The primary structure comprises 470 residues: Neuraminidase (470 aa).

Residues 1–6 lie on the Intravirion side of the membrane; that stretch reads MNPNQK. Residues 7 to 27 form a helical membrane-spanning segment; it reads IITIGSISIAIGIISLILQIG. Positions 11-33 are involved in apical transport and lipid raft association; the sequence is GSISIAIGIISLILQIGNIISIW. At 28–470 the chain is on the virion surface side; sequence NIISIWASHS…GAELPFTIDK (443 aa). A hypervariable stalk region region spans residues 36–90; the sequence is HSIQTGSQNHTGICNQRIITYENSTWVNQTYVNINNTNVVAGKDKTSMTLAGNSS. N-linked (GlcNAc...) asparagine; by host glycosylation is found at Asn-44, Asn-58, Asn-63, Asn-70, and Asn-88. The tract at residues 91–470 is head of neuraminidase; sequence LCPIRGWAIY…GAELPFTIDK (380 aa). 8 cysteine pairs are disulfide-bonded: Cys-92/Cys-417, Cys-124/Cys-129, Cys-184/Cys-231, Cys-233/Cys-238, Cys-279/Cys-292, Cys-281/Cys-290, Cys-318/Cys-335, and Cys-421/Cys-447. A substrate-binding site is contributed by Arg-118. The N-linked (GlcNAc...) asparagine; by host glycan is linked to Asn-146. Asp-151 serves as the catalytic Proton donor/acceptor. Residue Arg-152 coordinates substrate. Residue Asn-235 is glycosylated (N-linked (GlcNAc...) asparagine; by host). 277 to 278 is a binding site for substrate; it reads EE. Arg-293 serves as a coordination point for substrate. The Ca(2+) site is built by Asp-294, Gly-298, and Asp-324. Arg-368 provides a ligand contact to substrate. Tyr-402 (nucleophile) is an active-site residue. 2 N-linked (GlcNAc...) asparagine; by host glycosylation sites follow: Asn-434 and Asn-455.

It belongs to the glycosyl hydrolase 34 family. As to quaternary structure, homotetramer. Ca(2+) serves as cofactor. In terms of processing, N-glycosylated.

It is found in the virion membrane. The protein resides in the host apical cell membrane. The enzyme catalyses Hydrolysis of alpha-(2-&gt;3)-, alpha-(2-&gt;6)-, alpha-(2-&gt;8)- glycosidic linkages of terminal sialic acid residues in oligosaccharides, glycoproteins, glycolipids, colominic acid and synthetic substrates.. With respect to regulation, inhibited by the neuraminidase inhibitors zanamivir (Relenza) and oseltamivir (Tamiflu). These drugs interfere with the release of progeny virus from infected cells and are effective against all influenza strains. Resistance to neuraminidase inhibitors is quite rare. In terms of biological role, catalyzes the removal of terminal sialic acid residues from viral and cellular glycoconjugates. Cleaves off the terminal sialic acids on the glycosylated HA during virus budding to facilitate virus release. Additionally helps virus spread through the circulation by further removing sialic acids from the cell surface. These cleavages prevent self-aggregation and ensure the efficient spread of the progeny virus from cell to cell. Otherwise, infection would be limited to one round of replication. Described as a receptor-destroying enzyme because it cleaves a terminal sialic acid from the cellular receptors. May facilitate viral invasion of the upper airways by cleaving the sialic acid moieties on the mucin of the airway epithelial cells. Likely to plays a role in the budding process through its association with lipid rafts during intracellular transport. May additionally display a raft-association independent effect on budding. Plays a role in the determination of host range restriction on replication and virulence. Sialidase activity in late endosome/lysosome traffic seems to enhance virus replication. In Influenza A virus (strain A/USA:Memphis/10/1996 H1N1), this protein is Neuraminidase.